We begin with the raw amino-acid sequence, 159 residues long: Phosphopantetheine adenylyltransferase (159 aa).

Ser8 contacts substrate. ATP-binding positions include 8-9 and His16; that span reads SF. Residues Lys40, Leu72, and Arg86 each coordinate substrate. ATP-binding positions include 87-89, Glu97, and 122-128; these read GLR and YSFISSS.

It belongs to the bacterial CoaD family. In terms of assembly, homohexamer. Requires Mg(2+) as cofactor.

It is found in the cytoplasm. The enzyme catalyses (R)-4'-phosphopantetheine + ATP + H(+) = 3'-dephospho-CoA + diphosphate. The protein operates within cofactor biosynthesis; coenzyme A biosynthesis; CoA from (R)-pantothenate: step 4/5. Reversibly transfers an adenylyl group from ATP to 4'-phosphopantetheine, yielding dephospho-CoA (dPCoA) and pyrophosphate. This chain is Phosphopantetheine adenylyltransferase, found in Thermosipho melanesiensis (strain DSM 12029 / CIP 104789 / BI429).